The sequence spans 307 residues: Mycothiol acetyltransferase (307 aa).

N-acetyltransferase domains are found at residues 12 to 157 (TRTD…PPLP) and 160 to 307 (VTLR…YQLG). Glutamate 43 serves as a coordination point for 1D-myo-inositol 2-(L-cysteinylamino)-2-deoxy-alpha-D-glucopyranoside. Position 87–89 (87–89 (LAV)) interacts with acetyl-CoA. Glutamate 187, lysine 227, and glutamate 239 together coordinate 1D-myo-inositol 2-(L-cysteinylamino)-2-deoxy-alpha-D-glucopyranoside. Residues 243 to 245 (LGV) and 250 to 256 (HGGGLGK) contribute to the acetyl-CoA site. Tyrosine 278 is a 1D-myo-inositol 2-(L-cysteinylamino)-2-deoxy-alpha-D-glucopyranoside binding site.

The protein belongs to the acetyltransferase family. MshD subfamily. In terms of assembly, monomer.

It catalyses the reaction 1D-myo-inositol 2-(L-cysteinylamino)-2-deoxy-alpha-D-glucopyranoside + acetyl-CoA = mycothiol + CoA + H(+). Catalyzes the transfer of acetyl from acetyl-CoA to desacetylmycothiol (Cys-GlcN-Ins) to form mycothiol. The sequence is that of Mycothiol acetyltransferase from Salinispora tropica (strain ATCC BAA-916 / DSM 44818 / JCM 13857 / NBRC 105044 / CNB-440).